The primary structure comprises 677 residues: UvrABC system protein B (677 aa).

Residues 25-412 (QGVNGGERYQ…GGEVAQQVIR (388 aa)) form the Helicase ATP-binding domain. An ATP-binding site is contributed by 38–45 (GATGTGKT). The Beta-hairpin signature appears at 91-114 (YYDYYQPEAYVPVSDTYIAKTASI). Residues 429–591 (QVDDLLGEIR…IVPTAAGKKA (163 aa)) form the Helicase C-terminal domain. One can recognise a UVR domain in the interval 639–674 (PELIDQLEGKMKEAAKKLDFEDAANLRDRIKQLRQK).

The protein belongs to the UvrB family. As to quaternary structure, forms a heterotetramer with UvrA during the search for lesions. Interacts with UvrC in an incision complex.

It is found in the cytoplasm. The UvrABC repair system catalyzes the recognition and processing of DNA lesions. A damage recognition complex composed of 2 UvrA and 2 UvrB subunits scans DNA for abnormalities. Upon binding of the UvrA(2)B(2) complex to a putative damaged site, the DNA wraps around one UvrB monomer. DNA wrap is dependent on ATP binding by UvrB and probably causes local melting of the DNA helix, facilitating insertion of UvrB beta-hairpin between the DNA strands. Then UvrB probes one DNA strand for the presence of a lesion. If a lesion is found the UvrA subunits dissociate and the UvrB-DNA preincision complex is formed. This complex is subsequently bound by UvrC and the second UvrB is released. If no lesion is found, the DNA wraps around the other UvrB subunit that will check the other stand for damage. This Parasynechococcus marenigrum (strain WH8102) protein is UvrABC system protein B.